A 153-amino-acid polypeptide reads, in one-letter code: Pheromone-binding protein Gp-9 (153 aa).

The first 19 residues, 1 to 19 (MKTFVLHIFIFALVAFASA), serve as a signal peptide directing secretion. 3 cysteine pairs are disulfide-bonded: Cys37–Cys77, Cys73–Cys129, and Cys118–Cys138.

This sequence belongs to the PBP/GOBP family. As to quaternary structure, homodimer.

Its subcellular location is the secreted. Functionally, colony queen number, a major feature of social organization, is associated with worker genotype for Gp-9. Colonies are headed by either a single reproductive queen (monogyne form) or multiple queens (polygyne form). Differences in worker Gp-9 genotypes between social forms may cause differences in workers' abilities to recognize queens and regulate their numbers. This chain is Pheromone-binding protein Gp-9, found in Solenopsis pusillignis (Fire ant).